The primary structure comprises 124 residues: Modulator protein MzrA (124 aa).

Over 1 to 7 (MINRRMK) the chain is Cytoplasmic. Residues 8-28 (TGFVFHLLLLLLPLVVLVTSS) form a helical membrane-spanning segment. The Periplasmic segment spans residues 29–124 (RRTADDVTLH…KLSQQPFKLG (96 aa)).

The protein belongs to the MzrA family. In terms of assembly, interacts with EnvZ.

It is found in the cell inner membrane. Functionally, modulates the activity of the EnvZ/OmpR two-component regulatory system, probably by directly modulating EnvZ enzymatic activity and increasing stability of phosphorylated OmpR. This is Modulator protein MzrA from Musicola paradisiaca (strain Ech703) (Dickeya paradisiaca).